The chain runs to 83 residues: Exodeoxyribonuclease 7 small subunit (83 aa).

It belongs to the XseB family. As to quaternary structure, heterooligomer composed of large and small subunits.

It localises to the cytoplasm. The enzyme catalyses Exonucleolytic cleavage in either 5'- to 3'- or 3'- to 5'-direction to yield nucleoside 5'-phosphates.. In terms of biological role, bidirectionally degrades single-stranded DNA into large acid-insoluble oligonucleotides, which are then degraded further into small acid-soluble oligonucleotides. In Sinorhizobium medicae (strain WSM419) (Ensifer medicae), this protein is Exodeoxyribonuclease 7 small subunit.